Here is a 123-residue protein sequence, read N- to C-terminus: Iron-sulfur cluster insertion protein ErpA (123 aa).

Iron-sulfur cluster-binding residues include C51, C115, and C117.

This sequence belongs to the HesB/IscA family. Homodimer. Requires iron-sulfur cluster as cofactor.

Required for insertion of 4Fe-4S clusters for at least IspG. This is Iron-sulfur cluster insertion protein ErpA from Halorhodospira halophila (strain DSM 244 / SL1) (Ectothiorhodospira halophila (strain DSM 244 / SL1)).